The primary structure comprises 206 residues: Large ribosomal subunit protein uL4 (206 aa).

A disordered region spans residues 47–77; sequence TRAQKGRSDVTGSTRKQWRQKGTGRARTGAA.

The protein belongs to the universal ribosomal protein uL4 family. As to quaternary structure, part of the 50S ribosomal subunit.

One of the primary rRNA binding proteins, this protein initially binds near the 5'-end of the 23S rRNA. It is important during the early stages of 50S assembly. It makes multiple contacts with different domains of the 23S rRNA in the assembled 50S subunit and ribosome. Its function is as follows. Forms part of the polypeptide exit tunnel. The polypeptide is Large ribosomal subunit protein uL4 (Nitrosomonas europaea (strain ATCC 19718 / CIP 103999 / KCTC 2705 / NBRC 14298)).